The sequence spans 46 residues: MMEASPGLSIAITFAVILLALTGFSIYTSFGPPSKQLEDPFEDHED.

The helical transmembrane segment at 7–27 (GLSIAITFAVILLALTGFSIY) threads the bilayer.

This sequence belongs to the PsbN family.

The protein localises to the cellular thylakoid membrane. Its function is as follows. May play a role in photosystem I and II biogenesis. The sequence is that of Protein PsbN from Synechococcus elongatus (strain ATCC 33912 / PCC 7942 / FACHB-805) (Anacystis nidulans R2).